Here is a 464-residue protein sequence, read N- to C-terminus: Argininosuccinate lyase (464 aa).

It belongs to the lyase 1 family. Argininosuccinate lyase subfamily.

Its subcellular location is the cytoplasm. The enzyme catalyses 2-(N(omega)-L-arginino)succinate = fumarate + L-arginine. Its pathway is amino-acid biosynthesis; L-arginine biosynthesis; L-arginine from L-ornithine and carbamoyl phosphate: step 3/3. Strongly inhibited by L-arginine. Inhibitory effects are lowered at pH 7.0 compared to those at pH 8.0. At 37 degrees Celsius and pH 7.5, activity decreases to 73% and 31% in the presence of 1 mM and 10 mM arginine, respectively. Activity also decreases to 84%, 93%, 82% and 85% in the presence of 10 mM sodium citrate, citrulline, asparatate and glutamate, respectively. Activity decreases to 96% in presence of 1 mM L-lysine. Its function is as follows. Catalyzes the last step of arginine biosynthesis, the conversion of argininosuccinate into L-arginine and fumarate. The chain is Argininosuccinate lyase from Arthrospira platensis (strain NIES-39 / UTEX 3086 / IAM M-135) (Spirulina platensis).